A 305-amino-acid chain; its full sequence is Deoxyribonuclease gamma (305 aa).

A signal peptide spans 1-20 (MSRELAPLLLLLLSIHSALA). The short motif at 35-51 (KQEDKNAMDVIVKVIKR) is the Bipartite nuclear localization signal element. Residues glutamate 100 and histidine 155 contribute to the active site. A disulfide bond links cysteine 194 and cysteine 231. The tract at residues 284–305 (SRAFTNSKKSVTLRKKTKSKRS) is not required for free DNA-nuclease activity but required for activity towards liposome-coated DNA. Positions 296-304 (LRKKTKSKR) match the Nuclear localization signal motif.

This sequence belongs to the DNase I family. Requires Ca(2+) as cofactor. The cofactor is Mg(2+). Post-translationally, poly-ADP-ribosylated by PARP1. ADP-ribosylation negatively regulates enzymatic activity during apoptosis. As to expression, liver and spleen.

It is found in the nucleus. Its subcellular location is the endoplasmic reticulum. The protein resides in the secreted. Its activity is regulated as follows. Inhibited by zinc. Has DNA hydrolytic activity. Is capable of both single- and double-stranded DNA cleavage, producing DNA fragments with 3'-OH ends. Can cleave chromatin to nucleosomal units and cleaves nucleosomal and liposome-coated DNA. Acts in internucleosomal DNA fragmentation (INDF) during apoptosis and necrosis. The role in apoptosis includes myogenic and neuronal differentiation, and BCR-mediated clonal deletion of self-reactive B cells. Is active on chromatin in apoptotic cell-derived membrane-coated microparticles and thus suppresses anti-DNA autoimmunity. Together with DNASE1, plays a key role in degrading neutrophil extracellular traps (NETs). NETs are mainly composed of DNA fibers and are released by neutrophils to bind pathogens during inflammation. Degradation of intravascular NETs by DNASE1 and DNASE1L3 is required to prevent formation of clots that obstruct blood vessels and cause organ damage following inflammation. The polypeptide is Deoxyribonuclease gamma (Homo sapiens (Human)).